A 121-amino-acid polypeptide reads, in one-letter code: uncharacterized protein (121 aa).

Residues 85-111 (NANNDDYESPYKTPKIKSNPSLDSSGS) are disordered. Residues 100-111 (IKSNPSLDSSGS) show a composition bias toward polar residues.

This is an uncharacterized protein from Dictyostelium discoideum (Social amoeba).